The following is a 505-amino-acid chain: uncharacterized protein (505 aa).

14 helical membrane-spanning segments follow: residues 9–29, 49–69, 86–106, 122–142, 156–176, 181–201, 235–255, 261–281, 310–330, 341–361, 371–391, 395–415, 435–455, and 464–484; these read ANLTAFLLSVFLSVWMTPFIV, YFSVITVALSSVVVRFFSVAA, AASVLISLLLLLPLAGSAFFI, LSILIGSVLFILTFLMAGFGA, IQAVQMLIRVLSVLLLFACFA, QIQLAALAGAVIASVLSFYFF, IGVLLFLQIDLLTANLMLGAS, AAIIQFPLLLRSLAGTVASLF, LLLALPAALLGGLAGPFLTIW, LLFIHAGYLVVSLAFMPLFYI, PAIVTLLLGAVNVVLAVTLSG, LGLYGITLAGAISLILKNAIF, IIGPLSAAVFAWTVCKAIQFI, and LIATGVTVSFCYAVFAFMLVC.

Its subcellular location is the cell membrane. In terms of biological role, may be involved in the production of the exopolysaccharide (EPS) component of the extracellular matrix during biofilm formation. EPS is responsible for the adhesion of chains of cells into bundles. This is an uncharacterized protein from Bacillus subtilis (strain 168).